The sequence spans 309 residues: Glutaminase 2 (309 aa).

Residues Ser-65, Asn-117, Glu-162, Asn-169, Tyr-193, Tyr-245, and Val-263 each coordinate substrate.

It belongs to the glutaminase family. In terms of assembly, homotetramer.

The enzyme catalyses L-glutamine + H2O = L-glutamate + NH4(+). In Bacillus subtilis (strain 168), this protein is Glutaminase 2.